The primary structure comprises 249 residues: MILELDCGNSFIKWRVLRAEAGALIAEGVVDSDGALVDNLRSLEKVSLVKCRLVSVRTEDETNLLIGLLKQEFGISVVCAAPAREMSGVKNGYDDYERLGLDRWLAMLGGFHLAKGACLVLDFGTAVTADFISADGEHLGGFICPGMPLMRNQLRTHTRKIRYGDLAAERALTSQAPGRNTVEAVERGCSLMLRGFVLTQLEMARSYWGDDYRVFITGGDAELVSDVAPEARVVSDLVFVGLAMACPLS.

Asp-6–Lys-13 serves as a coordination point for ATP. Residues Tyr-93 and Gly-100–Arg-103 contribute to the substrate site. Asp-102 serves as the catalytic Proton acceptor. A K(+)-binding site is contributed by Asp-122. Residue Thr-125 coordinates ATP. Residue Thr-181 coordinates substrate.

It belongs to the type III pantothenate kinase family. In terms of assembly, homodimer. NH4(+) is required as a cofactor. K(+) serves as cofactor.

It is found in the cytoplasm. The enzyme catalyses (R)-pantothenate + ATP = (R)-4'-phosphopantothenate + ADP + H(+). Its pathway is cofactor biosynthesis; coenzyme A biosynthesis; CoA from (R)-pantothenate: step 1/5. In terms of biological role, catalyzes the phosphorylation of pantothenate (Pan), the first step in CoA biosynthesis. The chain is Type III pantothenate kinase from Pseudomonas fluorescens (strain Pf0-1).